Consider the following 193-residue polypeptide: Ion-translocating oxidoreductase complex subunit A (193 aa).

Transmembrane regions (helical) follow at residues 5–25 (LLLLIGTVLVNNFVLVKFLGL), 39–59 (IGMGLATTFVLTLASVCSYLV), 67–87 (LGIEYLRTMSFILVIAVVVQF), 102–122 (VLGIFLPLITTNCAVLGVALL), 134–154 (IIYGFGAAVGFSLVLILFSAM), and 171–191 (SIAMITAGLMSLAFMGFTGLV).

This sequence belongs to the NqrDE/RnfAE family. In terms of assembly, the complex is composed of six subunits: RnfA, RnfB, RnfC, RnfD, RnfE and RnfG.

The protein localises to the cell inner membrane. Functionally, part of a membrane-bound complex that couples electron transfer with translocation of ions across the membrane. In Aliivibrio fischeri (strain ATCC 700601 / ES114) (Vibrio fischeri), this protein is Ion-translocating oxidoreductase complex subunit A.